The chain runs to 460 residues: Cysteine--tRNA ligase (460 aa).

Cysteine 27 lines the Zn(2+) pocket. A 'HIGH' region motif is present at residues 29–39 (PTVYDLIHVGN). Zn(2+)-binding residues include cysteine 207, histidine 232, and glutamate 236. A 'KMSKS' region motif is present at residues 264 to 268 (KMSKS). Lysine 267 provides a ligand contact to ATP.

The protein belongs to the class-I aminoacyl-tRNA synthetase family. As to quaternary structure, monomer. Zn(2+) serves as cofactor.

The protein localises to the cytoplasm. It carries out the reaction tRNA(Cys) + L-cysteine + ATP = L-cysteinyl-tRNA(Cys) + AMP + diphosphate. This chain is Cysteine--tRNA ligase, found in Thermotoga petrophila (strain ATCC BAA-488 / DSM 13995 / JCM 10881 / RKU-1).